The following is a 443-amino-acid chain: Trigger factor (443 aa).

Residues Ala-161 to Pro-246 enclose the PPIase FKBP-type domain.

Belongs to the FKBP-type PPIase family. Tig subfamily.

Its subcellular location is the cytoplasm. The enzyme catalyses [protein]-peptidylproline (omega=180) = [protein]-peptidylproline (omega=0). Involved in protein export. Acts as a chaperone by maintaining the newly synthesized protein in an open conformation. Functions as a peptidyl-prolyl cis-trans isomerase. The chain is Trigger factor from Nitrosococcus oceani (strain ATCC 19707 / BCRC 17464 / JCM 30415 / NCIMB 11848 / C-107).